The sequence spans 337 residues: MLAKSKTIRVAINGFGRIGRLVFRALLSQKNIEIVAVNDLTHPDTLAHLLKYDSAHGEFKKKVVAKDNTLMIDKKKVLVFSEKDPANLPWAEHNIDIVVESTGRFVSEEGASLHLQAGAKRVIISAPAKQKTIKTVVYNVNHKIINAEDKIISAASCTTNCLAPMVHVLEKNFGILHGTMVTVHAYTADQRLQDAPHSDLRRARAAACNIVPTTTGAAKAIGLVVPEATGKLNGMALRVPVLTGSIVELCVALEKDATVEQINQAMKKAASASFRYCEDEIVSSDIVGSEHGSIFDSKLTNIIEVDGNKLYKVYAWYDNESSYVNQLVRVVNYCAKL.

NAD(+)-binding positions include 17–18 (RI), aspartate 39, lysine 83, and serine 125. D-glyceraldehyde 3-phosphate-binding positions include 156–158 (SCT), threonine 187, arginine 202, 215–216 (TG), and arginine 238. Residue cysteine 157 is the Nucleophile of the active site. Asparagine 319 contacts NAD(+).

The protein belongs to the glyceraldehyde-3-phosphate dehydrogenase family. As to quaternary structure, homotetramer.

It localises to the cytoplasm. The enzyme catalyses D-glyceraldehyde 3-phosphate + phosphate + NAD(+) = (2R)-3-phospho-glyceroyl phosphate + NADH + H(+). Its pathway is carbohydrate degradation; glycolysis; pyruvate from D-glyceraldehyde 3-phosphate: step 1/5. Catalyzes the oxidative phosphorylation of glyceraldehyde 3-phosphate (G3P) to 1,3-bisphosphoglycerate (BPG) using the cofactor NAD. The first reaction step involves the formation of a hemiacetal intermediate between G3P and a cysteine residue, and this hemiacetal intermediate is then oxidized to a thioester, with concomitant reduction of NAD to NADH. The reduced NADH is then exchanged with the second NAD, and the thioester is attacked by a nucleophilic inorganic phosphate to produce BPG. This chain is Glyceraldehyde-3-phosphate dehydrogenase (gapA), found in Mycoplasma pneumoniae (strain ATCC 29342 / M129 / Subtype 1) (Mycoplasmoides pneumoniae).